A 218-amino-acid polypeptide reads, in one-letter code: MRLILLGPPGAGKGTQAAFVTQHFAIPQISTGDMLRAAVKQGTPLGQEAKKVMDAGGLVSDEIIIGLVQDRLKQPDCANGYLFDGFPRTIPQADALKSAGVALDYVVEIEVPEDDIIERMSGRRVHPASGRSYHVRFNPPKQEGLDDVTGEPLVQRDDDREDTVRNRLAVYQKQTRPLVDYYASWAQAGDGKAPKYRKISGVGAVDDIKARLFQALAS.

10-15 contacts ATP; it reads GAGKGT. The NMP stretch occupies residues 30-59; the sequence is STGDMLRAAVKQGTPLGQEAKKVMDAGGLV. AMP is bound by residues T31, R36, 57-59, 85-88, and Q92; these read GLV and GFPR. The interval 122–159 is LID; that stretch reads GRRVHPASGRSYHVRFNPPKQEGLDDVTGEPLVQRDDD. ATP is bound by residues R123 and 132-133; that span reads SY. AMP contacts are provided by R156 and R167. An ATP-binding site is contributed by G203.

It belongs to the adenylate kinase family. In terms of assembly, monomer.

It localises to the cytoplasm. It carries out the reaction AMP + ATP = 2 ADP. The protein operates within purine metabolism; AMP biosynthesis via salvage pathway; AMP from ADP: step 1/1. Its function is as follows. Catalyzes the reversible transfer of the terminal phosphate group between ATP and AMP. Plays an important role in cellular energy homeostasis and in adenine nucleotide metabolism. This chain is Adenylate kinase, found in Bordetella petrii (strain ATCC BAA-461 / DSM 12804 / CCUG 43448).